The primary structure comprises 273 residues: MDIILWLQAVILGLVQGMTEFLPISSTAHLILFSDLLGWKSIWHKTALDAMQFGSVIAVLGYFWQDIHQIVQGSWQAWQRRDWQREEWKLLLGITVGTIPALAAGLLLKLAKVELDRPQIIATMAIAMAILLGLAEQWGSRKRTYQDIGILDGFLVGCGQMIALLPGASRSGSTLAAALALGLERPTAARFSFLLGIPTLTIATLVQAKDVFDEGTLLIPLVIATLSSMVFSYLAIAWLLQFLQRHSTWVFIWYRIGLGSALWGAIALGSLQS.

Helical transmembrane passes span 3–23 (IILW…EFLP), 47–67 (ALDA…WQDI), 90–110 (LLLG…LLKL), 120–140 (IIAT…QWGS), 148–168 (IGIL…LPGA), 186–206 (PTAA…ATLV), 217–237 (LLIP…LAIA), and 249–269 (WVFI…IALG).

This sequence belongs to the UppP family.

The protein localises to the cell inner membrane. It catalyses the reaction di-trans,octa-cis-undecaprenyl diphosphate + H2O = di-trans,octa-cis-undecaprenyl phosphate + phosphate + H(+). In terms of biological role, catalyzes the dephosphorylation of undecaprenyl diphosphate (UPP). Confers resistance to bacitracin. This Thermosynechococcus vestitus (strain NIES-2133 / IAM M-273 / BP-1) protein is Undecaprenyl-diphosphatase.